A 216-amino-acid chain; its full sequence is Thylakoid lumenal 16.5 kDa protein, chloroplastic (216 aa).

The transit peptide at 1–38 (MAKSLLCSSTLNPFFSTTLSSSKKNQIAYSGNSKNQTS) directs the protein to the chloroplast. The N-terminal 35 residues, 39–73 (SSLLWKRRELSLGFMSSLVAIGLVSNDRRRHDANA), are a transit peptide targeting the thylakoid.

It localises to the plastid. The protein localises to the chloroplast thylakoid lumen. This chain is Thylakoid lumenal 16.5 kDa protein, chloroplastic, found in Arabidopsis thaliana (Mouse-ear cress).